The sequence spans 773 residues: MAAESALQVVEKLQARLAANPDPKKLLKYLKKLSVLPITVDILVETGVGKTVNSFRKHEQVGNFARDLVAQWKKLVPVERNNEAEDQDFEKSNSRKRPRDVPQQEEEAEGNYQESWQASGSQPYSPEHRQKKHRKLPELERPHKVAHGHERRDERKRCHKVSPPYSSDPESSDYGHVQSPPPSSPHQMYTDLSRSPEMDQEPIVSHPKPGKVHSNTFQDRLGVSHLGEHQGKGAVSQNKPHKSSHKEKRPVDARGDEKSSVMGREKSHKASSKEESRRLLSEDSAKEKLPSSVVKKEKDREGNSLKKKLSPALDVASDNHFKKPKHKDSEKIKSDKNKQSVDSVDSGRGTGDPLPRAKDKVPNNLKAQEGKVRTNSDRKSPGSLPKVEEMDMDDEFEQPTMSFESYLSYDQPRKKKKKVVKTSGTALGEKGLKKKDSKSTSKNLNSAQKLPKANENKSDKLQPAGAEPTRPRKVPTDVLPALPDIPLPAIQTNYRPLPSLELISSFQPKRKAFSSPQEEEEAGFTGRRMNSKMQVYSGSKCAYLPKMMTLHQQCIRVLKNNIDSIFEVGGVPYSVLEPVLERCTPDQLYRIEECNHVLIEETDQLWKVHCHRDFKEERPEEYESWREMYLRLQDAREQRLRLLTNNIRSAHANKPKGRQAKMAFVNSVAKPPRDVRRRQEKFGTGGAAVPEKVRIKPAPYTTGSSHVPASNSSSSFHSSPEELAYEGPSTSSAHLAPVASSSVSYDPRKPAVKKIAPMMAKTIKAFKNRFSRR.

A TFIIS N-terminal domain is found at 4 to 79 (ESALQVVEKL…AQWKKLVPVE (76 aa)). Over residues 79-93 (ERNNEAEDQDFEKSN) the composition is skewed to basic and acidic residues. A disordered region spans residues 79–480 (ERNNEAEDQD…PRKVPTDVLP (402 aa)). The span at 112–124 (YQESWQASGSQPY) shows a compositional bias: polar residues. Residues 136–156 (LPELERPHKVAHGHERRDERK) show a composition bias toward basic and acidic residues. Low complexity predominate over residues 162–174 (SPPYSSDPESSDY). Ser195 is subject to Phosphoserine. Residues 239–248 (KPHKSSHKEK) show a composition bias toward basic residues. Basic and acidic residues-rich tracts occupy residues 249-265 (RPVDARGDEKSSVMGRE) and 271-304 (SSKEESRRLLSEDSAKEKLPSSVVKKEKDREGNS). Ser310 bears the Phosphoserine mark. Basic and acidic residues-rich tracts occupy residues 317–339 (SDNHFKKPKHKDSEKIKSDKNKQ) and 368–380 (QEGKVRTNSDRKS). Ser380 and Ser383 each carry phosphoserine. At Lys430 the chain carries N6-acetyllysine. Position 515 is a phosphoserine (Ser515). Residues 521-680 (EAGFTGRRMN…PPRDVRRRQE (160 aa)) form an activation domain region. Residues 549-558 (TLHQQCIRVL) are BC-box. The region spanning 565 to 609 (IFEVGGVPYSVLEPVLERCTPDQLYRIEECNHVLIEETDQLWKVH) is the F-box domain. The disordered stretch occupies residues 671–747 (PPRDVRRRQE…VASSSVSYDP (77 aa)). Residues 704 to 718 (SSHVPASNSSSSFHS) are compositionally biased toward low complexity. Polar residues predominate over residues 728 to 744 (PSTSSAHLAPVASSSVS).

Heterotrimer of an A (ELOA, ELOA2 or ELOA3P), ELOB and ELOC subunit. Part of a multisubunit ubiquitin ligase complex consisting of elongin BC complex (ELOB and ELOC), elongin A/ELOA, RBX1 and CUL5. Interacts with ERCC6; the interaction is induced by DNA damaging agents or inhibitors of RNA polymerase II elongation. Interacts (via BC-box) with CUL5.

It localises to the nucleus. Functionally, SIII, also known as elongin, is a general transcription elongation factor that increases the RNA polymerase II transcription elongation past template-encoded arresting sites. Subunit A is transcriptionally active and its transcription activity is strongly enhanced by binding to the dimeric complex of the SIII regulatory subunits B and C (elongin BC complex). Its function is as follows. As part of a multisubunit complex composed of elongin BC complex (ELOB and ELOC), elongin A/ELOA, RBX1 and CUL5; polyubiquitinates monoubiquitinated POLR2A. In Rattus norvegicus (Rat), this protein is Elongin-A (Eloa).